We begin with the raw amino-acid sequence, 296 residues long: Aspartate and glycine-rich protein (296 aa).

The span at 1-77 shows a compositional bias: gly residues; the sequence is GDGENGNGNG…GNGNGNGNGN (77 aa). Disordered stretches follow at residues 1–219 and 233–296; these read GDGE…DNGG and RARA…YTSY. Composition is skewed to acidic residues over residues 80-96 and 103-194; these read FDDD…DDWN and NGDD…DDRW. A compositionally biased stretch (gly residues) spans 198 to 210; the sequence is NGNGNGNGNGNGN. Residues 233 to 243 show a composition bias toward low complexity; that stretch reads RARAAASAAGR. The segment covering 244 to 259 has biased composition (gly residues); the sequence is SRGGSGGSGGSGGSGG. Positions 270–281 are enriched in low complexity; it reads RAFASARASSGN.

Component of the acid-soluble and acid-insoluble organic matrix of calcified shell layers (at protein level).

Its subcellular location is the secreted. This is Aspartate and glycine-rich protein from Haliotis asinina (Donkey's ear abalone).